Consider the following 279-residue polypeptide: NADPH-dependent 7-cyano-7-deazaguanine reductase (279 aa).

86–88 (IES) contacts substrate. Residue 88-89 (SK) participates in NADPH binding. Cysteine 187 (thioimide intermediate) is an active-site residue. The Proton donor role is filled by aspartate 194. 226-227 (HE) contributes to the substrate binding site. 255-256 (RG) lines the NADPH pocket.

The protein belongs to the GTP cyclohydrolase I family. QueF type 2 subfamily. As to quaternary structure, homodimer.

The protein localises to the cytoplasm. The catalysed reaction is 7-aminomethyl-7-carbaguanine + 2 NADP(+) = 7-cyano-7-deazaguanine + 2 NADPH + 3 H(+). It participates in tRNA modification; tRNA-queuosine biosynthesis. Catalyzes the NADPH-dependent reduction of 7-cyano-7-deazaguanine (preQ0) to 7-aminomethyl-7-deazaguanine (preQ1). The chain is NADPH-dependent 7-cyano-7-deazaguanine reductase from Actinobacillus pleuropneumoniae serotype 3 (strain JL03).